The chain runs to 388 residues: Single-stranded DNA-binding protein 3 (388 aa).

N-acetylmethionine is present on M1. The region spanning 16-48 (AREKLALYVYEYLLHVGAQKSAQTFLSEIRWEK) is the LisH domain. The disordered stretch occupies residues 101–388 (VLGNIPPNDG…NYSPSMTMSV (288 aa)). The segment covering 126 to 139 (GSQPSPHAQPPPHN) has biased composition (pro residues). 3 positions are modified to asymmetric dimethylarginine: R155, R161, and R165. Composition is skewed to low complexity over residues 200–209 (MQRMNPPRGM) and 250–268 (PNSA…TYVG). The span at 272 to 282 (GGGPPGTPIMP) shows a compositional bias: pro residues. Residues 285 to 296 (ADSTNSSDNIYT) are compositionally biased toward polar residues. Over residues 315-325 (GSDGPMGGMGG) the composition is skewed to gly residues. Low complexity predominate over residues 346–357 (NSPNNISGISNP). Phosphoserine occurs at positions 347, 352, and 355. A Phosphothreonine modification is found at T360. Over residues 373 to 388 (HSFQNDNYSPSMTMSV) the composition is skewed to polar residues. A phosphoserine mark is found at S381 and S387.

Highly expressed in all hematopoietic tissues, including spleen, lymph node, peripheral blood, bone marrow, thymus, and fetal liver, with highest expression in thymus and fetal liver. Expression is also high in heart, brain, kidney, and skeletal muscle.

It is found in the nucleus. Functionally, may be involved in transcription regulation of the alpha 2(I) collagen gene where it binds to the single-stranded polypyrimidine sequences in the promoter region. The chain is Single-stranded DNA-binding protein 3 (SSBP3) from Homo sapiens (Human).